Reading from the N-terminus, the 210-residue chain is Large ribosomal subunit protein uL4 (210 aa).

Residues 44-79 (QHQGTHKVKTRSEVSGGGRKPYRQKGTGNARRGSSR) form a disordered region.

Belongs to the universal ribosomal protein uL4 family. As to quaternary structure, part of the 50S ribosomal subunit.

Functionally, one of the primary rRNA binding proteins, this protein initially binds near the 5'-end of the 23S rRNA. It is important during the early stages of 50S assembly. It makes multiple contacts with different domains of the 23S rRNA in the assembled 50S subunit and ribosome. Its function is as follows. Forms part of the polypeptide exit tunnel. In Chloroherpeton thalassium (strain ATCC 35110 / GB-78), this protein is Large ribosomal subunit protein uL4.